Consider the following 511-residue polypeptide: Xylose import ATP-binding protein XylG (511 aa).

ABC transporter domains are found at residues 6–244 (LEMR…VGRE) and 261–506 (FEAR…IGKP). 38-45 (GENGAGKS) is a binding site for ATP.

This sequence belongs to the ABC transporter superfamily. Xylose importer (TC 3.A.1.2.4) family. The complex is composed of two ATP-binding proteins (XylG), two transmembrane proteins (XylH) and a solute-binding protein (XylF).

The protein localises to the cell inner membrane. The enzyme catalyses D-xylose(out) + ATP + H2O = D-xylose(in) + ADP + phosphate + H(+). Functionally, part of the ABC transporter complex XylFGH involved in xylose import. Responsible for energy coupling to the transport system. The chain is Xylose import ATP-binding protein XylG from Brucella suis biovar 1 (strain 1330).